The following is a 340-amino-acid chain: tRNA (cytosine(34)-C(5))-methyltransferase, mitochondrial (340 aa).

Residues Cys139–Lys145, Glu162, Asp193, and Asp211 contribute to the S-adenosyl-L-methionine site. Cys265 functions as the Nucleophile in the catalytic mechanism.

Belongs to the class I-like SAM-binding methyltransferase superfamily. RsmB/NOP family.

The protein resides in the mitochondrion matrix. The enzyme catalyses cytidine(34) in mitochondrial tRNA + S-adenosyl-L-methionine = 5-methylcytidine(34) in mitochondrial tRNA + S-adenosyl-L-homocysteine + H(+). Its function is as follows. Mitochondrial tRNA methyltransferase that mediates methylation of cytosine to 5-methylcytosine (m5C) at position 34 of mt-tRNA(Met). mt-tRNA(Met) methylation at cytosine(34) takes place at the wobble position of the anticodon and initiates the formation of 5-formylcytosine (f(5)c) at this position. mt-tRNA(Met) containing the f(5)c modification at the wobble position enables recognition of the AUA codon in addition to the AUG codon, expanding codon recognition in mitochondrial translation. The protein is tRNA (cytosine(34)-C(5))-methyltransferase, mitochondrial of Homo sapiens (Human).